The sequence spans 161 residues: MSFFSDFFNSKKTEIFAPLSGDIINIEDVPDPVFSKKIVGDGIAIKPSSNRILAPVNGTIGKIFETMHAFSIISEDNVELFIHFGIDTVKLKGEGFKKKAKDNQKVKIGDEIIILDLEFIKEKAESILTPVVISNIENFKKIKKSSGTIAAGQTVIITLYH.

The region spanning 31-135 is the PTS EIIA type-1 domain; sequence DPVFSKKIVG…SILTPVVISN (105 aa). Residues H68 and H83 each contribute to the Zn(2+) site. Catalysis depends on H83, which acts as the Tele-phosphohistidine intermediate; for EIIA activity. Phosphohistidine; by HPr is present on H83.

Zn(2+) serves as cofactor.

The protein localises to the cytoplasm. Its function is as follows. The phosphoenolpyruvate-dependent sugar phosphotransferase system (sugar PTS), a major carbohydrate active transport system, catalyzes the phosphorylation of incoming sugar substrates concomitantly with their translocation across the cell membrane. The enzyme II complex composed of PtsG and Crr is involved in glucose transport. The sequence is that of PTS system glucose-specific EIIA component (crr) from Buchnera aphidicola subsp. Acyrthosiphon pisum (strain APS) (Acyrthosiphon pisum symbiotic bacterium).